We begin with the raw amino-acid sequence, 148 residues long: D-aminoacyl-tRNA deacylase (148 aa).

A Gly-cisPro motif, important for rejection of L-amino acids motif is present at residues 136–137 (GP).

The protein belongs to the DTD family. Homodimer.

The protein localises to the cytoplasm. The enzyme catalyses glycyl-tRNA(Ala) + H2O = tRNA(Ala) + glycine + H(+). It carries out the reaction a D-aminoacyl-tRNA + H2O = a tRNA + a D-alpha-amino acid + H(+). In terms of biological role, an aminoacyl-tRNA editing enzyme that deacylates mischarged D-aminoacyl-tRNAs. Also deacylates mischarged glycyl-tRNA(Ala), protecting cells against glycine mischarging by AlaRS. Acts via tRNA-based rather than protein-based catalysis; rejects L-amino acids rather than detecting D-amino acids in the active site. By recycling D-aminoacyl-tRNA to D-amino acids and free tRNA molecules, this enzyme counteracts the toxicity associated with the formation of D-aminoacyl-tRNA entities in vivo and helps enforce protein L-homochirality. The sequence is that of D-aminoacyl-tRNA deacylase from Streptococcus mutans serotype c (strain ATCC 700610 / UA159).